A 445-amino-acid chain; its full sequence is Ribosomal protein uS12 methylthiotransferase RimO (445 aa).

The MTTase N-terminal domain occupies 10–120 (PKVGFVSLGC…VVNAVHEVVP (111 aa)). Residues cysteine 19, cysteine 55, cysteine 84, cysteine 153, cysteine 157, and cysteine 160 each contribute to the [4Fe-4S] cluster site. The Radical SAM core domain maps to 139–378 (LTPRHYAYLK…AHQQEISSAR (240 aa)). The TRAM domain maps to 380-445 (QQRIGKEIEV…DEYDLWAETL (66 aa)).

This sequence belongs to the methylthiotransferase family. RimO subfamily. Requires [4Fe-4S] cluster as cofactor.

Its subcellular location is the cytoplasm. The enzyme catalyses L-aspartate(89)-[ribosomal protein uS12]-hydrogen + (sulfur carrier)-SH + AH2 + 2 S-adenosyl-L-methionine = 3-methylsulfanyl-L-aspartate(89)-[ribosomal protein uS12]-hydrogen + (sulfur carrier)-H + 5'-deoxyadenosine + L-methionine + A + S-adenosyl-L-homocysteine + 2 H(+). In terms of biological role, catalyzes the methylthiolation of an aspartic acid residue of ribosomal protein uS12. In Pseudomonas fluorescens (strain ATCC BAA-477 / NRRL B-23932 / Pf-5), this protein is Ribosomal protein uS12 methylthiotransferase RimO.